A 427-amino-acid chain; its full sequence is Serine--tRNA ligase (427 aa).

231–233 contributes to the L-serine binding site; it reads TAE. 262 to 264 lines the ATP pocket; sequence RSE. Glutamate 285 provides a ligand contact to L-serine. 349 to 352 contributes to the ATP binding site; that stretch reads EISS. L-serine is bound at residue serine 385.

Belongs to the class-II aminoacyl-tRNA synthetase family. Type-1 seryl-tRNA synthetase subfamily. Homodimer. The tRNA molecule binds across the dimer.

It is found in the cytoplasm. It carries out the reaction tRNA(Ser) + L-serine + ATP = L-seryl-tRNA(Ser) + AMP + diphosphate + H(+). The enzyme catalyses tRNA(Sec) + L-serine + ATP = L-seryl-tRNA(Sec) + AMP + diphosphate + H(+). It functions in the pathway aminoacyl-tRNA biosynthesis; selenocysteinyl-tRNA(Sec) biosynthesis; L-seryl-tRNA(Sec) from L-serine and tRNA(Sec): step 1/1. Its function is as follows. Catalyzes the attachment of serine to tRNA(Ser). Is also able to aminoacylate tRNA(Sec) with serine, to form the misacylated tRNA L-seryl-tRNA(Sec), which will be further converted into selenocysteinyl-tRNA(Sec). In Brucella canis (strain ATCC 23365 / NCTC 10854 / RM-666), this protein is Serine--tRNA ligase.